A 76-amino-acid chain; its full sequence is uncharacterized protein (76 aa).

An HTH cro/C1-type domain is found at 6–60 (LKKNRLEKGFTQEEVAKAAQIGRAYYTMIENGTRKPSVIVSKKIGEKLGFDWTIF). A DNA-binding region (H-T-H motif) is located at residues 17-36 (QEEVAKAAQIGRAYYTMIEN).

This is an uncharacterized protein from Bacillus subtilis (strain 168).